A 435-amino-acid polypeptide reads, in one-letter code: MNHKVGFVSLGCPKALVDSERIITQLKAQGYELVPTYQDAGVVVINTCGFIDSAVQESLDTIKEAMAENGRVIVTGCLGAKADVIKNACPDVLHISGAHAYEEVVNAVHQYLPPPADPFTQLIPPQGIKLTPRHYAYLKISEGCNQKCTFCIIPTMRGKLQSYPMAQILTEAKKLKQAGVKELLVISQDTSAYGVDTRYQQVEWQGKTVNTRFYDLCEQLGELGIWVRLHYVYPYPHVDDIVPLMRDGLILPYLDIPLQHANSRILKAMKRPASSENTLLRIASWREICPDITLRSTFIVGFPGETEEEFSELLAFLKEAQLDRVGCFKYSPVEGAKANDLDNPVSEDIKEERYHRFMQVQAEISRNKLKNKIGSTQTVLIDEINDDQIIARSKSDAPEIDGLVYLPKTSGITVGSFAEVVITDSDDYDLYASLV.

The 111-residue stretch at 3–113 (HKVGFVSLGC…VVNAVHQYLP (111 aa)) folds into the MTTase N-terminal domain. The [4Fe-4S] cluster site is built by cysteine 12, cysteine 48, cysteine 77, cysteine 144, cysteine 148, and cysteine 151. The region spanning 130 to 367 (LTPRHYAYLK…MQVQAEISRN (238 aa)) is the Radical SAM core domain. In terms of domain architecture, TRAM spans 370–435 (KNKIGSTQTV…DDYDLYASLV (66 aa)).

This sequence belongs to the methylthiotransferase family. RimO subfamily. The cofactor is [4Fe-4S] cluster.

The protein resides in the cytoplasm. The catalysed reaction is L-aspartate(89)-[ribosomal protein uS12]-hydrogen + (sulfur carrier)-SH + AH2 + 2 S-adenosyl-L-methionine = 3-methylsulfanyl-L-aspartate(89)-[ribosomal protein uS12]-hydrogen + (sulfur carrier)-H + 5'-deoxyadenosine + L-methionine + A + S-adenosyl-L-homocysteine + 2 H(+). Catalyzes the methylthiolation of an aspartic acid residue of ribosomal protein uS12. The polypeptide is Ribosomal protein uS12 methylthiotransferase RimO (Legionella pneumophila subsp. pneumophila (strain Philadelphia 1 / ATCC 33152 / DSM 7513)).